We begin with the raw amino-acid sequence, 500 residues long: MPVQTAVVVLAAGAGTRMRSKTPKVLHTLGGRTMLAHSLHAAAEVDPAHLVTVVGHDKERVGAAVGALETELGRPITVAVQEEQNGTGHAVECGLSALPADFRGTVLVTAADVPLLDGHTLHALVDEHRSEPTPAAVTVLTFTAPEPTGYGRIVRLPHDGEIAEIVEEADATEEQAAITEVNAGVYAFDAEFLRTALGQLNANNAQGELYLTDVVKIARASGAPVFAAHLSDSAKVAGANDRVQLSRLAAELNRRTVENWMRAGVTVVDPSTTWIDVGVTLGRDVTIHPGVQLLGTTTVGEDAVIGPDTTLTDVSVGDGASVVRTHGSESTIGAGATVGPFSYLRPGTVLGASGKLGAFVETKNADIGAHSKVPHLTYVGDATIGEYSNIGASSVFVNYDGVAKSRTVVGSHVRTGSDTMFVAPVQVGDGAYTGAGTVLRFDVPPGALAVSGGKQRNIDGWVQRNRPGTPAAEAASAAGPHHSSDLHETEKQDLKDGIEQ.

Positions 1 to 242 (MPVQTAVVVL…SAKVAGANDR (242 aa)) are pyrophosphorylase. Residues 10–13 (LAAG), Lys-24, Gln-81, and 86–87 (GT) contribute to the UDP-N-acetyl-alpha-D-glucosamine site. Residue Asp-112 participates in Mg(2+) binding. Residues Gly-151, Glu-167, Asn-182, and Asn-240 each coordinate UDP-N-acetyl-alpha-D-glucosamine. Position 240 (Asn-240) interacts with Mg(2+). A linker region spans residues 243–263 (VQLSRLAAELNRRTVENWMRA). Residues 264–500 (GVTVVDPSTT…KQDLKDGIEQ (237 aa)) are N-acetyltransferase. 2 residues coordinate UDP-N-acetyl-alpha-D-glucosamine: Arg-345 and Lys-363. Residue His-375 is the Proton acceptor of the active site. UDP-N-acetyl-alpha-D-glucosamine is bound by residues Tyr-378 and Asn-389. Residues Ala-392, 398–399 (NY), Ser-417, and Ala-435 contribute to the acetyl-CoA site. A disordered region spans residues 459 to 500 (DGWVQRNRPGTPAAEAASAAGPHHSSDLHETEKQDLKDGIEQ). The span at 482–500 (HSSDLHETEKQDLKDGIEQ) shows a compositional bias: basic and acidic residues.

In the N-terminal section; belongs to the N-acetylglucosamine-1-phosphate uridyltransferase family. This sequence in the C-terminal section; belongs to the transferase hexapeptide repeat family. In terms of assembly, homotrimer. Mg(2+) serves as cofactor.

It localises to the cytoplasm. It carries out the reaction alpha-D-glucosamine 1-phosphate + acetyl-CoA = N-acetyl-alpha-D-glucosamine 1-phosphate + CoA + H(+). The catalysed reaction is N-acetyl-alpha-D-glucosamine 1-phosphate + UTP + H(+) = UDP-N-acetyl-alpha-D-glucosamine + diphosphate. The protein operates within nucleotide-sugar biosynthesis; UDP-N-acetyl-alpha-D-glucosamine biosynthesis; N-acetyl-alpha-D-glucosamine 1-phosphate from alpha-D-glucosamine 6-phosphate (route II): step 2/2. Its pathway is nucleotide-sugar biosynthesis; UDP-N-acetyl-alpha-D-glucosamine biosynthesis; UDP-N-acetyl-alpha-D-glucosamine from N-acetyl-alpha-D-glucosamine 1-phosphate: step 1/1. It participates in bacterial outer membrane biogenesis; LPS lipid A biosynthesis. In terms of biological role, catalyzes the last two sequential reactions in the de novo biosynthetic pathway for UDP-N-acetylglucosamine (UDP-GlcNAc). The C-terminal domain catalyzes the transfer of acetyl group from acetyl coenzyme A to glucosamine-1-phosphate (GlcN-1-P) to produce N-acetylglucosamine-1-phosphate (GlcNAc-1-P), which is converted into UDP-GlcNAc by the transfer of uridine 5-monophosphate (from uridine 5-triphosphate), a reaction catalyzed by the N-terminal domain. This is Bifunctional protein GlmU from Rhodococcus opacus (strain B4).